A 359-amino-acid chain; its full sequence is Patr class I histocompatibility antigen, B-1 alpha chain (359 aa).

Positions 1–20 (APRTVLLLLSAALALTETWA) are cleaved as a signal peptide. The tract at residues 21–110 (GSHSMRYFYT…ALRYYNQSEA (90 aa)) is alpha-1. At 21–305 (GSHSMRYFYT…PSSQSTIPIV (285 aa)) the chain is on the extracellular side. A glycan (N-linked (GlcNAc...) asparagine) is linked at N106. Positions 111-202 (GSHTWQTMYG…ENGKETLQRA (92 aa)) are alpha-2. Cystine bridges form between C121–C184 and C223–C279. Positions 203 to 294 (DPPKTHVTHH…GLPKPLTLRW (92 aa)) are alpha-3. An Ig-like C1-type domain is found at 205 to 291 (PKTHVTHHPI…QHEGLPKPLT (87 aa)). The tract at residues 295–305 (EPSSQSTIPIV) is connecting peptide. The helical transmembrane segment at 306–329 (GIVAGLAVLVVTVAVVAVVAAVMC) threads the bilayer. Residues 330–359 (RRKSSGGKGGSYSQAASSDSAQGSDVSLTA) are Cytoplasmic-facing. The interval 332 to 359 (KSSGGKGGSYSQAASSDSAQGSDVSLTA) is disordered. A compositionally biased stretch (low complexity) spans 340–359 (SYSQAASSDSAQGSDVSLTA). Phosphoserine occurs at positions 353 and 356.

It belongs to the MHC class I family. As to quaternary structure, heterodimer of an alpha chain and a beta chain (beta-2-microglobulin).

Its subcellular location is the membrane. In terms of biological role, involved in the presentation of foreign antigens to the immune system. The protein is Patr class I histocompatibility antigen, B-1 alpha chain of Pan troglodytes (Chimpanzee).